We begin with the raw amino-acid sequence, 546 residues long: Glucose-6-phosphate isomerase (546 aa).

Glu-357 acts as the Proton donor in catalysis. Residues His-389 and Lys-509 contribute to the active site.

The protein belongs to the GPI family.

The protein resides in the cytoplasm. It catalyses the reaction alpha-D-glucose 6-phosphate = beta-D-fructose 6-phosphate. The protein operates within carbohydrate biosynthesis; gluconeogenesis. It functions in the pathway carbohydrate degradation; glycolysis; D-glyceraldehyde 3-phosphate and glycerone phosphate from D-glucose: step 2/4. Catalyzes the reversible isomerization of glucose-6-phosphate to fructose-6-phosphate. The polypeptide is Glucose-6-phosphate isomerase (Anaeromyxobacter sp. (strain K)).